The chain runs to 261 residues: Cytochrome c oxidase subunit 3 (261 aa).

Residues 1 to 15 (MTHQLHAYHMVKPSP) are Mitochondrial matrix-facing. Residues 16-34 (WPLTGALSAFLLTSGLIMW) traverse the membrane as a helical segment. At 35–40 (FHFYST) the chain is on the mitochondrial intermembrane side. Residues 41-66 (ALLTLGLLTNVLTMYQWWRDIIREST) form a helical membrane-spanning segment. Over 67 to 72 (YQGHHT) the chain is Mitochondrial matrix. A helical membrane pass occupies residues 73–105 (TPVQKSLRYGMTLFIISEVFFFAGFFWAFYHSS). Residues 106–128 (LAPTPRLGCHWPPTGITPLNPLE) lie on the Mitochondrial intermembrane side of the membrane. Residues 129–152 (VPLLNTSVLLASGVTITWAHHSLM) traverse the membrane as a helical segment. At 153–155 (NGN) the chain is on the mitochondrial matrix side. A helical transmembrane segment spans residues 156-183 (RKQTIQALLITILLGTYFTLVQISEYFE). Over 184 to 190 (APFTISD) the chain is Mitochondrial intermembrane. The chain crosses the membrane as a helical span at residues 191-223 (GIYGSTFFVATGFHGLHVIIGSTFLLICLIRQL). Topologically, residues 224–232 (FYHFTPSHH) are mitochondrial matrix. Residues 233–256 (FGFEAAAWYWHFVDVIWLFLYISI) form a helical membrane-spanning segment. The Mitochondrial intermembrane portion of the chain corresponds to 257-261 (YWWGS).

This sequence belongs to the cytochrome c oxidase subunit 3 family. As to quaternary structure, component of the cytochrome c oxidase (complex IV, CIV), a multisubunit enzyme composed of 14 subunits. The complex is composed of a catalytic core of 3 subunits MT-CO1, MT-CO2 and MT-CO3, encoded in the mitochondrial DNA, and 11 supernumerary subunits COX4I, COX5A, COX5B, COX6A, COX6B, COX6C, COX7A, COX7B, COX7C, COX8 and NDUFA4, which are encoded in the nuclear genome. The complex exists as a monomer or a dimer and forms supercomplexes (SCs) in the inner mitochondrial membrane with NADH-ubiquinone oxidoreductase (complex I, CI) and ubiquinol-cytochrome c oxidoreductase (cytochrome b-c1 complex, complex III, CIII), resulting in different assemblies (supercomplex SCI(1)III(2)IV(1) and megacomplex MCI(2)III(2)IV(2)).

The protein localises to the mitochondrion inner membrane. It catalyses the reaction 4 Fe(II)-[cytochrome c] + O2 + 8 H(+)(in) = 4 Fe(III)-[cytochrome c] + 2 H2O + 4 H(+)(out). In terms of biological role, component of the cytochrome c oxidase, the last enzyme in the mitochondrial electron transport chain which drives oxidative phosphorylation. The respiratory chain contains 3 multisubunit complexes succinate dehydrogenase (complex II, CII), ubiquinol-cytochrome c oxidoreductase (cytochrome b-c1 complex, complex III, CIII) and cytochrome c oxidase (complex IV, CIV), that cooperate to transfer electrons derived from NADH and succinate to molecular oxygen, creating an electrochemical gradient over the inner membrane that drives transmembrane transport and the ATP synthase. Cytochrome c oxidase is the component of the respiratory chain that catalyzes the reduction of oxygen to water. Electrons originating from reduced cytochrome c in the intermembrane space (IMS) are transferred via the dinuclear copper A center (CU(A)) of subunit 2 and heme A of subunit 1 to the active site in subunit 1, a binuclear center (BNC) formed by heme A3 and copper B (CU(B)). The BNC reduces molecular oxygen to 2 water molecules using 4 electrons from cytochrome c in the IMS and 4 protons from the mitochondrial matrix. The polypeptide is Cytochrome c oxidase subunit 3 (MT-CO3) (Papio hamadryas (Hamadryas baboon)).